Reading from the N-terminus, the 291-residue chain is Glycolipid transfer protein domain-containing protein 2 (291 aa).

N276 carries N-linked (GlcNAc...) asparagine glycosylation.

Belongs to the GLTP family.

The polypeptide is Glycolipid transfer protein domain-containing protein 2 (GLTPD2) (Homo sapiens (Human)).